The sequence spans 140 residues: MLMPKKVKYRKQMKGRMTGTPQRGVELAFGDFGLQATECGWLDSRQIEAARIAMTRYIKRGGKIWIRIFPDKPLTSKPAETRMGKGKGSPDSWVCVIKPGRILYEMEGVTEEVAREAFRLAAHKLPVASKFITRTEINEG.

It belongs to the universal ribosomal protein uL16 family. As to quaternary structure, part of the 50S ribosomal subunit.

Functionally, binds 23S rRNA and is also seen to make contacts with the A and possibly P site tRNAs. In Citrifermentans bemidjiense (strain ATCC BAA-1014 / DSM 16622 / JCM 12645 / Bem) (Geobacter bemidjiensis), this protein is Large ribosomal subunit protein uL16.